Here is a 117-residue protein sequence, read N- to C-terminus: MAWISLILSLLALSSGGAISQAVVTQESALTTSPGETVTLTCRSSTGAVTTSNYANWVQEKPDHLFTGLIGGTNNRAPGVPARFSGSLIGDKAALTITGAQTEDEAIYFCALWYSNH.

Positions 1 to 20 are cleaved as a signal peptide; that stretch reads MAWISLILSLLALSSGGAIS. Gln-21 is modified (pyrrolidone carboxylic acid). The 97-residue stretch at 21–117 folds into the Ig-like domain; it reads QAVVTQESAL…YFCALWYSNH (97 aa).

The polypeptide is Ig lambda-1 chain V region (Mus musculus (Mouse)).